The following is a 686-amino-acid chain: AsmA family protein YhjG (686 aa).

Topologically, residues 1–6 (MSKAGK) are cytoplasmic. A helical membrane pass occupies residues 7 to 27 (ITAAISGAFLLLIVVAIILIA). The Periplasmic segment spans residues 28-686 (TFDWNRLKPT…CRTILSQMKK (659 aa)). A disordered region spans residues 372-396 (VDSGKGAEKSKRSEQKKGEKSVQPA). The segment covering 376-391 (KGAEKSKRSEQKKGEK) has biased composition (basic and acidic residues).

It belongs to the AsmA family.

It is found in the cell inner membrane. In Escherichia coli (strain K12), this protein is AsmA family protein YhjG (yhjG).